Consider the following 241-residue polypeptide: Ribonuclease PH (241 aa).

Residues arginine 89 and 127–129 (GTR) contribute to the phosphate site.

The protein belongs to the RNase PH family. As to quaternary structure, homohexameric ring arranged as a trimer of dimers.

The enzyme catalyses tRNA(n+1) + phosphate = tRNA(n) + a ribonucleoside 5'-diphosphate. Its function is as follows. Phosphorolytic 3'-5' exoribonuclease that plays an important role in tRNA 3'-end maturation. Removes nucleotide residues following the 3'-CCA terminus of tRNAs; can also add nucleotides to the ends of RNA molecules by using nucleoside diphosphates as substrates, but this may not be physiologically important. Probably plays a role in initiation of 16S rRNA degradation (leading to ribosome degradation) during starvation. The protein is Ribonuclease PH of Xanthomonas campestris pv. campestris (strain 8004).